Reading from the N-terminus, the 166-residue chain is PTS system glucose-specific EIIA component (166 aa).

Positions D34–N138 constitute a PTS EIIA type-1 domain. 2 residues coordinate Zn(2+): H71 and H86. Catalysis depends on H86, which acts as the Tele-phosphohistidine intermediate; for EIIA activity. H86 is modified (phosphohistidine; by HPr).

Heterodimer with glycerol kinase (glpk). Zn(2+) serves as cofactor.

Its subcellular location is the cytoplasm. Functionally, the phosphoenolpyruvate-dependent sugar phosphotransferase system (sugar PTS), a major carbohydrate active transport system, catalyzes the phosphorylation of incoming sugar substrates concomitantly with their translocation across the cell membrane. The enzyme II complex composed of PtsG and Crr is involved in glucose transport. The sequence is that of PTS system glucose-specific EIIA component (crr) from Staphylococcus aureus (strain MSSA476).